Reading from the N-terminus, the 198-residue chain is Guanylate kinase (198 aa).

The region spanning 4–186 (PRPVVLSGPS…AYATLKQALS (183 aa)) is the Guanylate kinase-like domain. Residue 14-19 (GAGKST) coordinates ATP. 37–51 (SHTTRNPRPGEEDGK) provides a ligand contact to substrate. Catalysis depends on residues Arg44, Arg137, and Arg148. 171-172 (ND) is an ATP binding site.

Belongs to the guanylate kinase family. Monomer. Interacts with RD3. As to expression, widely expressed. In retina is expressed in inner segment, outer nuclear layer, outer plexiform layer, inner plexiform layer, and ganglion cell layer (at protein level).

Its subcellular location is the photoreceptor inner segment. The protein localises to the cytoplasm. The protein resides in the cytosol. It localises to the mitochondrion. It carries out the reaction GMP + ATP = GDP + ADP. Its function is as follows. Catalyzes the phosphorylation of GMP to GDP. Essential enzyme for recycling GMP and indirectly, cyclic GMP (cGMP). Involved in the cGMP metabolism in photoreceptors. In Mus musculus (Mouse), this protein is Guanylate kinase.